We begin with the raw amino-acid sequence, 510 residues long: Maturase K (510 aa).

The protein belongs to the intron maturase 2 family. MatK subfamily.

It is found in the plastid. It localises to the chloroplast. In terms of biological role, usually encoded in the trnK tRNA gene intron. Probably assists in splicing its own and other chloroplast group II introns. The sequence is that of Maturase K from Populus nigra (Lombardy poplar).